A 195-amino-acid polypeptide reads, in one-letter code: ATP-dependent Clp protease proteolytic subunit (195 aa).

Catalysis depends on serine 96, which acts as the Nucleophile. Histidine 121 is a catalytic residue.

Belongs to the peptidase S14 family. As to quaternary structure, fourteen ClpP subunits assemble into 2 heptameric rings which stack back to back to give a disk-like structure with a central cavity, resembling the structure of eukaryotic proteasomes.

It is found in the cytoplasm. It carries out the reaction Hydrolysis of proteins to small peptides in the presence of ATP and magnesium. alpha-casein is the usual test substrate. In the absence of ATP, only oligopeptides shorter than five residues are hydrolyzed (such as succinyl-Leu-Tyr-|-NHMec, and Leu-Tyr-Leu-|-Tyr-Trp, in which cleavage of the -Tyr-|-Leu- and -Tyr-|-Trp bonds also occurs).. Cleaves peptides in various proteins in a process that requires ATP hydrolysis. Has a chymotrypsin-like activity. Plays a major role in the degradation of misfolded proteins. The protein is ATP-dependent Clp protease proteolytic subunit of Elusimicrobium minutum (strain Pei191).